The following is a 582-amino-acid chain: Acylamino-acid-releasing enzyme (582 aa).

Residues Ser445, Asp524, and His556 each act as charge relay system in the active site.

Belongs to the peptidase S9C family.

It is found in the cytoplasm. The catalysed reaction is Cleavage of an N-acetyl or N-formyl amino acid from the N-terminus of a polypeptide.. Its function is as follows. This enzyme catalyzes the hydrolysis of the N-terminal peptide bond of an N-acetylated peptide to generate an N-acetylated amino acid and a peptide with a free N-terminus. The polypeptide is Acylamino-acid-releasing enzyme (Aeropyrum pernix (strain ATCC 700893 / DSM 11879 / JCM 9820 / NBRC 100138 / K1)).